Here is a 397-residue protein sequence, read N- to C-terminus: uncharacterized protein (397 aa).

9 helical membrane passes run 1–21 (MGASGLVWTLTIVLIAGLMLV), 39–59 (VIQSATFVGIAILFGIAVVVF), 76–96 (EALSVDNLFVFLVIISSFGVP), 103–123 (VLLFGIAFALVTRTGFIFVGA), 124–144 (ALIENFNSAFYLFGLVLLVMA), 194–214 (MMTPLLLVMIAVGGTDILFAF), 219–239 (ALFGLTQNVYLVFAATAFSLL), 255–275 (LVYLSYGLAVILGFIGVKLML), and 301–321 (QSLTVIIIVLLITTAASFWSA).

Belongs to the TerC family.

It localises to the cell membrane. This is an uncharacterized protein from Mycobacterium bovis (strain ATCC BAA-935 / AF2122/97).